A 449-amino-acid chain; its full sequence is Heterogeneous nuclear ribonucleoprotein H2 (449 aa).

Met-1 carries the N-acetylmethionine modification. Met-2 is modified (N-acetylmethionine; in Heterogeneous nuclear ribonucleoprotein H2, N-terminally processed). In terms of domain architecture, RRM 1 spans 11–90 (FVVKVRGLPW…RYVEVFKSNS (80 aa)). Position 23 is a phosphoserine (Ser-23). A Glycyl lysine isopeptide (Lys-Gly) (interchain with G-Cter in SUMO2) cross-link involves residue Lys-35. Phosphoserine occurs at positions 54 and 63. Lys-87 participates in a covalent cross-link: Glycyl lysine isopeptide (Lys-Gly) (interchain with G-Cter in SUMO2). Ser-90 carries the post-translational modification Phosphoserine. Lys-98 participates in a covalent cross-link: Glycyl lysine isopeptide (Lys-Gly) (interchain with G-Cter in SUMO2). One can recognise an RRM 2 domain in the interval 111 to 188 (GFVRLRGLPF…RYIEIFKSSR (78 aa)). Arg-233 is subject to Dimethylated arginine; alternate. Arg-233 is modified (omega-N-methylarginine; alternate). The 1-1 repeat unit spans residues 234-249 (GAYGGGYGGYDDYGGY). The tract at residues 234 to 433 (GAYGGGYGGY…YGGQSSMSGY (200 aa)) is 2 X 16 AA Gly-rich approximate repeats. Tyr-246 is modified (phosphotyrosine). The RRM 3 domain maps to 289-364 (HCVHMRGLPY…RYVELFLNST (76 aa)). Ser-310 bears the Phosphoserine mark. 3 repeat units span residues 354–372 (HRYV…GGAY), 374–392 (HSYV…GGAY), and 418–433 (GGYG…MSGY). Positions 354 to 392 (HRYVELFLNSTAGTSGGAYDHSYVELFLNSTAGASGGAY) are 2 X 19 AA perfect repeats.

As to quaternary structure, component of a ribonucleoprotein complex containing mRNAs and RNA-binding proteins including DDX5, HNRNPH2 and SRSF1 as well as splicing regulator ARVCF. Interacts with TXNL4/DIM1.

The protein localises to the nucleus. It localises to the nucleoplasm. Functionally, this protein is a component of the heterogeneous nuclear ribonucleoprotein (hnRNP) complexes which provide the substrate for the processing events that pre-mRNAs undergo before becoming functional, translatable mRNAs in the cytoplasm. Binds poly(RG). The polypeptide is Heterogeneous nuclear ribonucleoprotein H2 (Hnrnph2) (Mus musculus (Mouse)).